The chain runs to 165 residues: Large ribosomal subunit protein uL11 (165 aa).

Arginine 67 is subject to N5-methylarginine.

It belongs to the universal ribosomal protein uL11 family. Component of the large ribosomal subunit (LSU). Mature N.crassa ribosomes consist of a small (40S) and a large (60S) subunit. The 40S small subunit contains 1 molecule of ribosomal RNA (18S rRNA) and at least 32 different proteins. The large 60S subunit contains 3 rRNA molecules (26S, 5.8S and 5S rRNA) and at least 42 different proteins.

Its subcellular location is the cytoplasm. In terms of biological role, component of the ribosome, a large ribonucleoprotein complex responsible for the synthesis of proteins in the cell. The small ribosomal subunit (SSU) binds messenger RNAs (mRNAs) and translates the encoded message by selecting cognate aminoacyl-transfer RNA (tRNA) molecules. The large subunit (LSU) contains the ribosomal catalytic site termed the peptidyl transferase center (PTC), which catalyzes the formation of peptide bonds, thereby polymerizing the amino acids delivered by tRNAs into a polypeptide chain. The nascent polypeptides leave the ribosome through a tunnel in the LSU and interact with protein factors that function in enzymatic processing, targeting, and the membrane insertion of nascent chains at the exit of the ribosomal tunnel. This is Large ribosomal subunit protein uL11 (rpl-12) from Neurospora crassa (strain ATCC 24698 / 74-OR23-1A / CBS 708.71 / DSM 1257 / FGSC 987).